Consider the following 156-residue polypeptide: Ribosomal RNA large subunit methyltransferase H (156 aa).

S-adenosyl-L-methionine is bound by residues leucine 73, glycine 104, and 123–128 (LSALTL).

This sequence belongs to the RNA methyltransferase RlmH family. In terms of assembly, homodimer.

The protein resides in the cytoplasm. The catalysed reaction is pseudouridine(1915) in 23S rRNA + S-adenosyl-L-methionine = N(3)-methylpseudouridine(1915) in 23S rRNA + S-adenosyl-L-homocysteine + H(+). In terms of biological role, specifically methylates the pseudouridine at position 1915 (m3Psi1915) in 23S rRNA. This chain is Ribosomal RNA large subunit methyltransferase H, found in Shewanella baltica (strain OS223).